A 385-amino-acid polypeptide reads, in one-letter code: Deoxyhypusine synthase (385 aa).

NAD(+) contacts are provided by residues 108–112 (SNLIS), 134–136 (TAG), E140, and D257. Residue 139-140 (EE) participates in spermidine binding. D262 provides a ligand contact to spermidine. Position 304 (G304) interacts with NAD(+). H309 is a spermidine binding site. An NAD(+)-binding site is contributed by 329 to 330 (TG). Residues 335-337 (GSD) and 344-350 (EAVSWGK) each bind spermidine. Residue K350 is the Nucleophile of the active site. NAD(+) is bound at residue 363–364 (DV).

The protein belongs to the deoxyhypusine synthase family. It depends on NAD(+) as a cofactor.

It catalyses the reaction [eIF5A protein]-L-lysine + spermidine = [eIF5A protein]-deoxyhypusine + propane-1,3-diamine. Its pathway is protein modification; eIF5A hypusination. In terms of biological role, catalyzes the NAD-dependent oxidative cleavage of spermidine and the subsequent transfer of the butylamine moiety of spermidine to the epsilon-amino group of a specific lysine residue of the eIF-5A precursor protein to form the intermediate deoxyhypusine residue. The chain is Deoxyhypusine synthase (DYS1) from Candida glabrata (strain ATCC 2001 / BCRC 20586 / JCM 3761 / NBRC 0622 / NRRL Y-65 / CBS 138) (Yeast).